We begin with the raw amino-acid sequence, 219 residues long: Probable nicotinate-nucleotide adenylyltransferase (219 aa).

It belongs to the NadD family.

It carries out the reaction nicotinate beta-D-ribonucleotide + ATP + H(+) = deamido-NAD(+) + diphosphate. It participates in cofactor biosynthesis; NAD(+) biosynthesis; deamido-NAD(+) from nicotinate D-ribonucleotide: step 1/1. In terms of biological role, catalyzes the reversible adenylation of nicotinate mononucleotide (NaMN) to nicotinic acid adenine dinucleotide (NaAD). The chain is Probable nicotinate-nucleotide adenylyltransferase from Chromohalobacter salexigens (strain ATCC BAA-138 / DSM 3043 / CIP 106854 / NCIMB 13768 / 1H11).